Reading from the N-terminus, the 63-residue chain is Large ribosomal subunit protein uL29 (63 aa).

It belongs to the universal ribosomal protein uL29 family.

This Alcanivorax borkumensis (strain ATCC 700651 / DSM 11573 / NCIMB 13689 / SK2) protein is Large ribosomal subunit protein uL29.